The following is a 71-amino-acid chain: Large ribosomal subunit protein uL30 (71 aa).

It belongs to the universal ribosomal protein uL30 family. Part of the 50S ribosomal subunit.

This is Large ribosomal subunit protein uL30 from Mycolicibacterium paratuberculosis (strain ATCC BAA-968 / K-10) (Mycobacterium paratuberculosis).